A 120-amino-acid polypeptide reads, in one-letter code: Large ribosomal subunit protein uL18 (120 aa).

The protein belongs to the universal ribosomal protein uL18 family. Part of the 50S ribosomal subunit; part of the 5S rRNA/L5/L18/L25 subcomplex. Contacts the 5S and 23S rRNAs.

This is one of the proteins that bind and probably mediate the attachment of the 5S RNA into the large ribosomal subunit, where it forms part of the central protuberance. The chain is Large ribosomal subunit protein uL18 from Nitrobacter winogradskyi (strain ATCC 25391 / DSM 10237 / CIP 104748 / NCIMB 11846 / Nb-255).